Consider the following 568-residue polypeptide: Urease subunit alpha (568 aa).

In terms of domain architecture, Urease spans 132–568 (GAIDTHVHYI…LPLAQLYNLF (437 aa)). Ni(2+)-binding residues include histidine 137, histidine 139, and lysine 219. The residue at position 219 (lysine 219) is an N6-carboxylysine. Histidine 221 contacts substrate. Ni(2+)-binding residues include histidine 248 and histidine 274. Catalysis depends on histidine 322, which acts as the Proton donor. Aspartate 362 contributes to the Ni(2+) binding site.

The protein belongs to the metallo-dependent hydrolases superfamily. Urease alpha subunit family. Heterotrimer of UreA (gamma), UreB (beta) and UreC (alpha) subunits. Three heterotrimers associate to form the active enzyme. Ni cation is required as a cofactor. In terms of processing, carboxylation allows a single lysine to coordinate two nickel ions.

It localises to the cytoplasm. The enzyme catalyses urea + 2 H2O + H(+) = hydrogencarbonate + 2 NH4(+). Its pathway is nitrogen metabolism; urea degradation; CO(2) and NH(3) from urea (urease route): step 1/1. This Azobacteroides pseudotrichonymphae genomovar. CFP2 protein is Urease subunit alpha.